Reading from the N-terminus, the 443-residue chain is Threonine/serine transporter TdcC (443 aa).

11 helical membrane-spanning segments follow: residues 24 to 44, 45 to 65, 95 to 115, 140 to 160, 163 to 183, 207 to 227, 259 to 279, 319 to 339, 363 to 383, 385 to 405, and 423 to 443; these read WVLG…PISA, GIGG…IAFF, VGGV…LWIY, VVAL…KDLM, VMGY…LSLI, ILVT…FSPI, ASVL…FTLS, ASII…LGTL, LNMI…YINP, ILDL…CLLP, and SNYF…YQLM.

It belongs to the amino acid/polyamine transporter 2 family. SdaC/TdcC subfamily.

Its subcellular location is the cell inner membrane. It catalyses the reaction L-threonine(in) + H(+)(in) = L-threonine(out) + H(+)(out). It carries out the reaction L-serine(in) + H(+)(in) = L-serine(out) + H(+)(out). Involved in the import of threonine and serine into the cell, with the concomitant import of a proton (symport system). The protein is Threonine/serine transporter TdcC of Edwardsiella tarda.